We begin with the raw amino-acid sequence, 216 residues long: 7-carboxy-7-deazaguanine synthase (216 aa).

Residues 12–14 (LQG) and Arg-27 each bind substrate. Residues 18 to 216 (RAGRAAVFCR…LQTHKYLGIP (199 aa)) enclose the Radical SAM core domain. The [4Fe-4S] cluster site is built by Cys-31, Cys-46, and Cys-49. Thr-51 lines the Mg(2+) pocket. Thr-93 serves as a coordination point for substrate. Residues Gly-95, 136–138 (SPK), and 176–179 (QPRD) contribute to the S-adenosyl-L-methionine site. Substrate is bound at residue Pro-216.

It belongs to the radical SAM superfamily. 7-carboxy-7-deazaguanine synthase family. In terms of assembly, homodimer. The cofactor is [4Fe-4S] cluster. Requires S-adenosyl-L-methionine as cofactor. Mg(2+) is required as a cofactor.

The enzyme catalyses 6-carboxy-5,6,7,8-tetrahydropterin + H(+) = 7-carboxy-7-deazaguanine + NH4(+). The protein operates within purine metabolism; 7-cyano-7-deazaguanine biosynthesis. Catalyzes the complex heterocyclic radical-mediated conversion of 6-carboxy-5,6,7,8-tetrahydropterin (CPH4) to 7-carboxy-7-deazaguanine (CDG), a step common to the biosynthetic pathways of all 7-deazapurine-containing compounds. This chain is 7-carboxy-7-deazaguanine synthase, found in Nitratidesulfovibrio vulgaris (strain ATCC 29579 / DSM 644 / CCUG 34227 / NCIMB 8303 / VKM B-1760 / Hildenborough) (Desulfovibrio vulgaris).